We begin with the raw amino-acid sequence, 530 residues long: Phosphoenolpyruvate carboxykinase (ATP) 2 (530 aa).

Substrate-binding residues include Arg-54, Tyr-191, and Lys-197. Residues Lys-197, His-216, and Gly-232 to Thr-240 each bind ATP. Mn(2+)-binding residues include Lys-197 and His-216. Asp-253 contacts Mn(2+). ATP contacts are provided by residues Glu-281, Arg-318, Arg-437 to Val-438, and Thr-443. Arg-318 contributes to the substrate binding site.

This sequence belongs to the phosphoenolpyruvate carboxykinase (ATP) family. Mn(2+) is required as a cofactor.

It is found in the cytoplasm. The enzyme catalyses oxaloacetate + ATP = phosphoenolpyruvate + ADP + CO2. It participates in carbohydrate biosynthesis; gluconeogenesis. Functionally, involved in the gluconeogenesis. Catalyzes the conversion of oxaloacetate (OAA) to phosphoenolpyruvate (PEP) through direct phosphoryl transfer between the nucleoside triphosphate and OAA. The polypeptide is Phosphoenolpyruvate carboxykinase (ATP) 2 (Salinibacter ruber (strain DSM 13855 / M31)).